The sequence spans 694 residues: Transcriptional activator HAA1 (694 aa).

The copper-fist DNA-binding region spans 1–40 (MVLINGIKYACERCIRGHRVTTCNHTDQPLMMIKPKGRPS). Zn(2+)-binding residues include Cys-11, Cys-14, Cys-23, and His-25. 2 disordered regions span residues 104 to 128 (QKRH…SQPM) and 209 to 240 (FNFL…DSSV). Residues 111 to 126 (SPSSSQKKGRSISRSQ) are compositionally biased toward polar residues. 4 positions are modified to phosphoserine: Ser-125, Ser-231, Ser-241, and Ser-291. Disordered regions lie at residues 332 to 388 (FDIN…NGLF), 479 to 514 (EKER…HRYP), 566 to 588 (SSIH…SRQD), and 650 to 677 (MIST…PPSQ). Residues 336–349 (DNCNRINSKSYSKT) are compositionally biased toward polar residues. The span at 350–378 (NSMNGNGMNNSNNNNINSNGNDKNNNNSS) shows a compositional bias: low complexity. Polar residues-rich tracts occupy residues 566-577 (SSIHSVPQSINS) and 664-677 (SPMS…PPSQ).

The protein localises to the nucleus. Regulates the transcription of a set of genes, many of which encode membrane proteins. Among the genes regulated are YGR138C and YRO2. Does not seem to be dependent on copper. The chain is Transcriptional activator HAA1 (HAA1) from Saccharomyces cerevisiae (strain ATCC 204508 / S288c) (Baker's yeast).